A 397-amino-acid polypeptide reads, in one-letter code: Chorismate synthase (397 aa).

Residues R40 and R46 each contribute to the NADP(+) site. FMN contacts are provided by residues R129–S131, Q257–A258, G302, K317–S321, and R343.

This sequence belongs to the chorismate synthase family. Homotetramer. FMNH2 is required as a cofactor.

The catalysed reaction is 5-O-(1-carboxyvinyl)-3-phosphoshikimate = chorismate + phosphate. It participates in metabolic intermediate biosynthesis; chorismate biosynthesis; chorismate from D-erythrose 4-phosphate and phosphoenolpyruvate: step 7/7. Its function is as follows. Catalyzes the anti-1,4-elimination of the C-3 phosphate and the C-6 proR hydrogen from 5-enolpyruvylshikimate-3-phosphate (EPSP) to yield chorismate, which is the branch point compound that serves as the starting substrate for the three terminal pathways of aromatic amino acid biosynthesis. This reaction introduces a second double bond into the aromatic ring system. The chain is Chorismate synthase from Chlorobium luteolum (strain DSM 273 / BCRC 81028 / 2530) (Pelodictyon luteolum).